A 33-amino-acid chain; its full sequence is Photosystem II reaction center protein T (33 aa).

Residues 3-23 (ALVYTFLLVSTLGILFFSIFF) form a helical membrane-spanning segment.

The protein belongs to the PsbT family. PSII is composed of 1 copy each of membrane proteins PsbA, PsbB, PsbC, PsbD, PsbE, PsbF, PsbH, PsbI, PsbJ, PsbK, PsbL, PsbM, PsbT, PsbY, PsbZ, Psb30/Ycf12, at least 3 peripheral proteins of the oxygen-evolving complex and a large number of cofactors. It forms dimeric complexes.

The protein resides in the plastid. The protein localises to the chloroplast thylakoid membrane. In terms of biological role, found at the monomer-monomer interface of the photosystem II (PS II) dimer, plays a role in assembly and dimerization of PSII. PSII is a light-driven water plastoquinone oxidoreductase, using light energy to abstract electrons from H(2)O, generating a proton gradient subsequently used for ATP formation. This chain is Photosystem II reaction center protein T, found in Pelargonium hortorum (Common geranium).